Here is a 203-residue protein sequence, read N- to C-terminus: Ribosomal RNA small subunit methyltransferase G (203 aa).

S-adenosyl-L-methionine contacts are provided by residues Gly73, Leu78, 124-125, and Arg138; that span reads VE.

It belongs to the methyltransferase superfamily. RNA methyltransferase RsmG family.

The protein localises to the cytoplasm. It catalyses the reaction guanosine(527) in 16S rRNA + S-adenosyl-L-methionine = N(7)-methylguanosine(527) in 16S rRNA + S-adenosyl-L-homocysteine. Its function is as follows. Specifically methylates the N7 position of guanine in position 527 of 16S rRNA. The protein is Ribosomal RNA small subunit methyltransferase G of Haemophilus ducreyi (strain 35000HP / ATCC 700724).